A 289-amino-acid polypeptide reads, in one-letter code: Thymidylate synthase (289 aa).

DUMP is bound by residues Arg-21 and 150–151 (RR). Cys-170 functions as the Nucleophile in the catalytic mechanism. DUMP contacts are provided by residues 191–194 (RSGD), Asn-202, and 232–234 (HIY). Asp-194 is a binding site for (6R)-5,10-methylene-5,6,7,8-tetrahydrofolate. A (6R)-5,10-methylene-5,6,7,8-tetrahydrofolate-binding site is contributed by Ala-288.

This sequence belongs to the thymidylate synthase family. Bacterial-type ThyA subfamily. As to quaternary structure, homodimer.

The protein localises to the cytoplasm. The enzyme catalyses dUMP + (6R)-5,10-methylene-5,6,7,8-tetrahydrofolate = 7,8-dihydrofolate + dTMP. Its pathway is pyrimidine metabolism; dTTP biosynthesis. Catalyzes the reductive methylation of 2'-deoxyuridine-5'-monophosphate (dUMP) to 2'-deoxythymidine-5'-monophosphate (dTMP) while utilizing 5,10-methylenetetrahydrofolate (mTHF) as the methyl donor and reductant in the reaction, yielding dihydrofolate (DHF) as a by-product. This enzymatic reaction provides an intracellular de novo source of dTMP, an essential precursor for DNA biosynthesis. This Mycoplasmopsis synoviae (strain 53) (Mycoplasma synoviae) protein is Thymidylate synthase.